A 64-amino-acid polypeptide reads, in one-letter code: Large ribosomal subunit protein bL32 (64 aa).

Belongs to the bacterial ribosomal protein bL32 family.

The chain is Large ribosomal subunit protein bL32 from Flavobacterium johnsoniae (strain ATCC 17061 / DSM 2064 / JCM 8514 / BCRC 14874 / CCUG 350202 / NBRC 14942 / NCIMB 11054 / UW101) (Cytophaga johnsonae).